The following is a 620-amino-acid chain: MQAASLSKIWRFDGNVGPENMDSSSFEDNECIETCKPNVLNVSERRELIHALSNQPEEASELLNSWSRNEIMKIICAEMGKERKYTGLNKPKLIENLLNLVSRPLGETSCSDRRNSRKKEKKMIGYIICCENLACRAALGCDDTFCRRCSCCICQKFDDNKDPSLWLTCDACGSSCHLECGLKQDRYGIGSDDLDGRFYCAYCGKDNDLLGCWRKQVKVAKETRRVDVLCYRLSLGQKLLRGTTKYRNLLELMDEAVKKLEGDVGPLSGWAMKMARGIVNRLSSGVHVQKLCSQAMEALDKVVSPSESVSGQGDKMTVRVEEIQARSVTVRVDSEEPSSSTQNKITGFRLFCRKSKDEECSSQGNCVVYLPETTSAIQGLEPDTEFCLRVVSFNEEGDLDESELRFTTLKDDGDEAGDQQSPLTNSSSGLCSNPSLPEDESNNVNKSCSKGNGDKDNTEHCSAGEVESELEEERLVKRKANKIDGRDLLVTPCKRDIYKGKQGGNKRFKSRTVSLNEKPEINNAANGVGDKDLGHIVKTIRCLEEEGHIDKSFRERFLTWYSLRATHREVRVVKIFVETFMEDLSSLGQQLVDTFSESILSKRSSTNGVVPAGICLKLWH.

Residues 148–206 (RCSCCICQKFDDNKDPSLWLTCDACGSSCHLECGLKQDRYGIGSDDLDGRFYCAYCGKD) form a PHD-type zinc finger. The Nuclear localization signal signature appears at 213–220 (WRKQVKVA). The 99-residue stretch at 314–412 (DKMTVRVEEI…ELRFTTLKDD (99 aa)) folds into the Fibronectin type-III domain. The disordered stretch occupies residues 411–466 (DDGDEAGDQQSPLTNSSSGLCSNPSLPEDESNNVNKSCSKGNGDKDNTEHCSAGEV). Positions 418–435 (DQQSPLTNSSSGLCSNPS) are enriched in polar residues. The short motif at 493–500 (CKRDIYKG) is the Nuclear localization signal element. A VIN3-Interacting Domain (VID) region spans residues 512 to 620 (TVSLNEKPEI…PAGICLKLWH (109 aa)).

In terms of assembly, interacts with VIL1 and VIL2. The heterodimer made of VIN3 and VIL1 is required for establishing the vernalization-induced epigenetic silencing of FLC. Component of the plant homeodomain / polycomb repressive complex 2 (PHD-PRC2) large complex during prolonged cold, composed of core PRC2 components (VRN2, EZA1, FIE and MSI1), and three related PHD finger proteins (VIL1, VIL2 and VIN3) that mediates histone H3 trimethylation on 'Lys-27' (H3K27me3). As to expression, expressed in shoot and root apices. Displays the same pattern of expression as FLC.

Its subcellular location is the nucleus. The protein localises to the nucleus speckle. In terms of biological role, plays a central role in vernalization by mediating the initial transcriptional repression of the homeotic gene FLC, a floral repressor, after a cold treatment. However, due to its transient expression, it cannot maintain repression of FLC, which is then maintained by Polycomb Group complexes containing VRN2 throughout development. Required to deacetylate histones on the FLC promoter. Together with VIL1, required during vernalization for the modifications of FLC and FLM chromatin that are associated with an epigenetically silenced state (e.g. chromatin modifications, histone deacetylation, and trimethylated H3 'Lys-4' H3K4me3 and 'Lys-27' H3K27me3) and with acquisition of competence to flower. This is Protein VERNALIZATION INSENSITIVE 3 (VIN3) from Arabidopsis thaliana (Mouse-ear cress).